The following is a 468-amino-acid chain: Glucose-dependent insulinotropic receptor (468 aa).

The Extracellular portion of the chain corresponds to 1–6; it reads MESSFS. A helical membrane pass occupies residues 7–27; it reads FGVILAVLTILIIAVNALVVV. The Cytoplasmic portion of the chain corresponds to 28-37; the sequence is AMLLSIYKND. Residues 38–58 traverse the membrane as a helical segment; the sequence is GVGLCFTLNLAVADTLIGVAI. Over 59–81 the chain is Extracellular; that stretch reads SGLVTDQLSSSAQHTQKTLCSLR. Residues 82–102 form a helical membrane-spanning segment; that stretch reads MAFVTSSAAASVLTVMLIAFD. Residues 103–125 lie on the Cytoplasmic side of the membrane; the sequence is RYLAIKQPLRYFQIMNGLVAGGC. Residues 126–146 traverse the membrane as a helical segment; that stretch reads IAGLWLISYLIGFLPLGVSIF. Residues 147–164 lie on the Extracellular side of the membrane; sequence QQTTYHGPCTFFAVFHPR. Residues 165 to 185 traverse the membrane as a helical segment; that stretch reads FVLTLSCAGFFPAVLLFVFFY. At 186 to 226 the chain is on the cytoplasmic side; that stretch reads CDMLKIASVHSQHIRKMEHAGAMVGACRPPRPVNDFKAVRT. A helical membrane pass occupies residues 227–247; the sequence is VSVLIGSFTLSWSPFLITSIV. At 248–262 the chain is on the extracellular side; it reads QVACHKCCLYQVLEK. Residues 263–283 traverse the membrane as a helical segment; the sequence is YLWLLGVGNSLLNPLIYAYWQ. Residues 284–468 lie on the Cytoplasmic side of the membrane; it reads REVRQQLCHM…MSDPLRTCRG (185 aa).

Belongs to the G-protein coupled receptor 1 family. Expression restricted to the beta-cells of pancreatic islets.

Its subcellular location is the cell membrane. In terms of biological role, receptor for the endogenous fatty-acid ethanolamide oleoylethanolamide (OEA) and lysophosphatidylcholine (LPC). Functions as a glucose-dependent insulinotropic receptor. The activity of this receptor is mediated by G proteins which activate adenylate cyclase. Seems to act through a G(s) mediated pathway. The sequence is that of Glucose-dependent insulinotropic receptor (Gpr119) from Rattus norvegicus (Rat).